Here is a 503-residue protein sequence, read N- to C-terminus: Arabinose import ATP-binding protein AraG 1 (503 aa).

ABC transporter domains lie at 5–240 (LRFD…MVGR) and 251–497 (RALG…LPQT). 37-44 (GENGAGKS) serves as a coordination point for ATP.

This sequence belongs to the ABC transporter superfamily. Arabinose importer (TC 3.A.1.2.2) family. The complex is composed of two ATP-binding proteins (AraG), two transmembrane proteins (AraH) and a solute-binding protein (AraF).

Its subcellular location is the cell inner membrane. The catalysed reaction is L-arabinose(out) + ATP + H2O = L-arabinose(in) + ADP + phosphate + H(+). Functionally, part of the ABC transporter complex AraFGH involved in arabinose import. Responsible for energy coupling to the transport system. This chain is Arabinose import ATP-binding protein AraG 1, found in Burkholderia ambifaria (strain ATCC BAA-244 / DSM 16087 / CCUG 44356 / LMG 19182 / AMMD) (Burkholderia cepacia (strain AMMD)).